Consider the following 274-residue polypeptide: Dermonecrotic toxin SdSicTox-betaIIB1bviii (274 aa).

His5 is an active-site residue. Mg(2+) is bound by residues Glu25 and Asp27. Catalysis depends on His41, which acts as the Nucleophile. 2 disulfide bridges follow: Cys45/Cys51 and Cys47/Cys190. A Mg(2+)-binding site is contributed by Asp85.

This sequence belongs to the arthropod phospholipase D family. Class II subfamily. The cofactor is Mg(2+). As to expression, expressed by the venom gland.

It is found in the secreted. It carries out the reaction an N-(acyl)-sphingosylphosphocholine = an N-(acyl)-sphingosyl-1,3-cyclic phosphate + choline. It catalyses the reaction an N-(acyl)-sphingosylphosphoethanolamine = an N-(acyl)-sphingosyl-1,3-cyclic phosphate + ethanolamine. The catalysed reaction is a 1-acyl-sn-glycero-3-phosphocholine = a 1-acyl-sn-glycero-2,3-cyclic phosphate + choline. The enzyme catalyses a 1-acyl-sn-glycero-3-phosphoethanolamine = a 1-acyl-sn-glycero-2,3-cyclic phosphate + ethanolamine. Its function is as follows. Dermonecrotic toxins cleave the phosphodiester linkage between the phosphate and headgroup of certain phospholipids (sphingolipid and lysolipid substrates), forming an alcohol (often choline) and a cyclic phosphate. This toxin acts on sphingomyelin (SM). It may also act on ceramide phosphoethanolamine (CPE), lysophosphatidylcholine (LPC) and lysophosphatidylethanolamine (LPE), but not on lysophosphatidylserine (LPS), and lysophosphatidylglycerol (LPG). It acts by transphosphatidylation, releasing exclusively cyclic phosphate products as second products. Induces dermonecrosis, hemolysis, increased vascular permeability, edema, inflammatory response, and platelet aggregation. This is Dermonecrotic toxin SdSicTox-betaIIB1bviii from Sicarius cf. damarensis (strain GJB-2008) (Six-eyed sand spider).